Here is a 349-residue protein sequence, read N- to C-terminus: MTSSADSGRDAAWLDDFLALTLAGDAPPAEAGECAARAVRWRWLGDGLLRLEPADAAQRMQSVLVSAGVHGDETAPIELLSTLVRDIARGALPLRCRLLVALGNPGAMRAGERYLDDDLNRLFGGRHAQLAASREAPRAAQLEAAAALFFSTAGRARGARWHIDMHTAIRASVFEQFALLPHTGEPPTRTMFEWLGEAQIAAVLLHTTKGSTFSHFTAQACGALACTLELGKVMPFGANDLSRFAPADAAVRRLVSGRRDAPRGALPRAFTVVDQITKQSDALELFVANDVPNFTPFARGTLLARDGDYRYAVRHEQERIVFPNPSVKPGLRAGLLVIETTRDTHAALA.

His70, Glu73, and His166 together coordinate Zn(2+). The active site involves Glu229.

It belongs to the AspA/AstE family. Succinylglutamate desuccinylase subfamily. Zn(2+) serves as cofactor.

The catalysed reaction is N-succinyl-L-glutamate + H2O = L-glutamate + succinate. The protein operates within amino-acid degradation; L-arginine degradation via AST pathway; L-glutamate and succinate from L-arginine: step 5/5. In terms of biological role, transforms N(2)-succinylglutamate into succinate and glutamate. This Burkholderia pseudomallei (strain 1710b) protein is Succinylglutamate desuccinylase.